The primary structure comprises 262 residues: Type III pantothenate kinase (262 aa).

Residue 6-13 (DAGNTNMV) participates in ATP binding. Residues Tyr100 and 107 to 110 (GADR) each bind substrate. Catalysis depends on Asp109, which acts as the Proton acceptor. Asp129 provides a ligand contact to K(+). Residue Thr132 participates in ATP binding. Position 184 (Thr184) interacts with substrate.

The protein belongs to the type III pantothenate kinase family. Homodimer. The cofactor is NH4(+). It depends on K(+) as a cofactor.

It is found in the cytoplasm. It catalyses the reaction (R)-pantothenate + ATP = (R)-4'-phosphopantothenate + ADP + H(+). The protein operates within cofactor biosynthesis; coenzyme A biosynthesis; CoA from (R)-pantothenate: step 1/5. Catalyzes the phosphorylation of pantothenate (Pan), the first step in CoA biosynthesis. This Clostridium tetani (strain Massachusetts / E88) protein is Type III pantothenate kinase.